The sequence spans 446 residues: MSEDTISAIATANGIGSIAIIRISGDRALEIASKITHKDNFTPRYASLSNIYDFHGELIDEAIVIYFKAPFSFTAEDVVEIQCHGGFIVAQSILKTTLLHGARLATAGEFSKRAFFNGRIDLSKAEAIAQLIEAKSEDAAKILAQQMKGSLKEYVEKIRDDLIHILAYSEVSIDYAEEDLPEDLVMQIQAKLKELKTSLNKTLQASKAREGLMQGFKVAIIGKPNVGKSSLLNALLNYNRAIVSDIAGTTRDTIEEQVKIGTHLIRIVDTAGIREASDEIERIGIERSLEAINESDIVIALFDASRVADYEDEQILSLIESKAGSKNVLHVKNKIDLEEKFYRSSLEFDIEINSKEGVEELILALENIMNQANTSDEMMLISQRQIGAVQNTLNYIDEAFEPLQEQELEIFSFNLNEAIKEIASITRPFENDEMLDKMFGSFCLGK.

Residues Arg22, Glu80, and Arg119 each coordinate (6S)-5-formyl-5,6,7,8-tetrahydrofolate. The 156-residue stretch at 215 to 370 (GFKVAIIGKP…LILALENIMN (156 aa)) folds into the TrmE-type G domain. Residue Asn225 coordinates K(+). Residues 225–230 (NVGKSS), 244–250 (SDIAGTT), and 269–272 (DTAG) each bind GTP. Ser229 provides a ligand contact to Mg(2+). Ser244, Ile246, and Thr249 together coordinate K(+). Thr250 is a binding site for Mg(2+). Lys446 contributes to the (6S)-5-formyl-5,6,7,8-tetrahydrofolate binding site.

This sequence belongs to the TRAFAC class TrmE-Era-EngA-EngB-Septin-like GTPase superfamily. TrmE GTPase family. As to quaternary structure, homodimer. Heterotetramer of two MnmE and two MnmG subunits. K(+) is required as a cofactor.

The protein localises to the cytoplasm. Functionally, exhibits a very high intrinsic GTPase hydrolysis rate. Involved in the addition of a carboxymethylaminomethyl (cmnm) group at the wobble position (U34) of certain tRNAs, forming tRNA-cmnm(5)s(2)U34. In Sulfurimonas denitrificans (strain ATCC 33889 / DSM 1251) (Thiomicrospira denitrificans (strain ATCC 33889 / DSM 1251)), this protein is tRNA modification GTPase MnmE.